Reading from the N-terminus, the 348-residue chain is Methylthioribose-1-phosphate isomerase (348 aa).

Residues 54 to 56, Arg96, and Gln199 each bind substrate; that span reads RGA. Catalysis depends on Asp240, which acts as the Proton donor. Position 250–251 (250–251) interacts with substrate; sequence NK.

The protein belongs to the eIF-2B alpha/beta/delta subunits family. MtnA subfamily.

It carries out the reaction 5-(methylsulfanyl)-alpha-D-ribose 1-phosphate = 5-(methylsulfanyl)-D-ribulose 1-phosphate. The protein operates within amino-acid biosynthesis; L-methionine biosynthesis via salvage pathway; L-methionine from S-methyl-5-thio-alpha-D-ribose 1-phosphate: step 1/6. Its function is as follows. Catalyzes the interconversion of methylthioribose-1-phosphate (MTR-1-P) into methylthioribulose-1-phosphate (MTRu-1-P). The sequence is that of Methylthioribose-1-phosphate isomerase from Thioalkalivibrio sulfidiphilus (strain HL-EbGR7).